Consider the following 168-residue polypeptide: MIGQVLSNDDWNRYKKEGFLVTKFGSLIDYVINWARSGSLWPMTFGLACCAVEMMHTASSRYDLDRYGIMFRASPRQADVMIVAGTLTNKMAAALRKVYDQMADPKYVVSMGSCANGGGYYHYSYSVVRGCDRIVPVDIYVPGCPPTAEALLYGMLCLQNKIKRTQNI.

Residues Cys49, Cys50, Cys114, and Cys144 each coordinate [4Fe-4S] cluster.

Belongs to the complex I 20 kDa subunit family. As to quaternary structure, NDH-1 is composed of 14 different subunits. Subunits NuoB, C, D, E, F, and G constitute the peripheral sector of the complex. It depends on [4Fe-4S] cluster as a cofactor.

The protein localises to the cell membrane. The catalysed reaction is a quinone + NADH + 5 H(+)(in) = a quinol + NAD(+) + 4 H(+)(out). Its function is as follows. NDH-1 shuttles electrons from NADH, via FMN and iron-sulfur (Fe-S) centers, to quinones in the respiratory chain. Couples the redox reaction to proton translocation (for every two electrons transferred, four hydrogen ions are translocated across the cytoplasmic membrane), and thus conserves the redox energy in a proton gradient. The protein is NADH-quinone oxidoreductase subunit B of Wolbachia sp. subsp. Brugia malayi (strain TRS).